The following is a 362-amino-acid chain: UDP-N-acetylglucosamine--N-acetylmuramyl-(pentapeptide) pyrophosphoryl-undecaprenol N-acetylglucosamine transferase (362 aa).

Residues 15 to 17, Asn-127, Arg-165, Ser-191, Ile-247, 266 to 271, and Gln-292 contribute to the UDP-N-acetyl-alpha-D-glucosamine site; these read TGG and ALTVSE.

Belongs to the glycosyltransferase 28 family. MurG subfamily.

It is found in the cell inner membrane. The enzyme catalyses di-trans,octa-cis-undecaprenyl diphospho-N-acetyl-alpha-D-muramoyl-L-alanyl-D-glutamyl-meso-2,6-diaminopimeloyl-D-alanyl-D-alanine + UDP-N-acetyl-alpha-D-glucosamine = di-trans,octa-cis-undecaprenyl diphospho-[N-acetyl-alpha-D-glucosaminyl-(1-&gt;4)]-N-acetyl-alpha-D-muramoyl-L-alanyl-D-glutamyl-meso-2,6-diaminopimeloyl-D-alanyl-D-alanine + UDP + H(+). It functions in the pathway cell wall biogenesis; peptidoglycan biosynthesis. Cell wall formation. Catalyzes the transfer of a GlcNAc subunit on undecaprenyl-pyrophosphoryl-MurNAc-pentapeptide (lipid intermediate I) to form undecaprenyl-pyrophosphoryl-MurNAc-(pentapeptide)GlcNAc (lipid intermediate II). This chain is UDP-N-acetylglucosamine--N-acetylmuramyl-(pentapeptide) pyrophosphoryl-undecaprenol N-acetylglucosamine transferase, found in Shewanella sp. (strain ANA-3).